The chain runs to 463 residues: Hydroxyacid-oxoacid transhydrogenase, mitochondrial (463 aa).

The protein belongs to the iron-containing alcohol dehydrogenase family. Hydroxyacid-oxoacid transhydrogenase subfamily.

It is found in the mitochondrion. It carries out the reaction (S)-3-hydroxybutanoate + 2-oxoglutarate = (R)-2-hydroxyglutarate + acetoacetate. The enzyme catalyses 4-hydroxybutanoate + 2-oxoglutarate = (R)-2-hydroxyglutarate + succinate semialdehyde. In terms of biological role, catalyzes the cofactor-independent reversible oxidation of gamma-hydroxybutyrate (GHB) to succinic semialdehyde (SSA) coupled to reduction of 2-ketoglutarate (2-KG) to D-2-hydroxyglutarate (D-2-HG). L-3-hydroxybutyrate (L-3-OHB) is also a substrate for HOT when using 2-KG as hydrogen acceptor, resulting in the formation of D-2-HG. This is Hydroxyacid-oxoacid transhydrogenase, mitochondrial (adhfe1) from Xenopus tropicalis (Western clawed frog).